Reading from the N-terminus, the 268-residue chain is Protein c-ets-1-B (268 aa).

The helix HI-1 stretch occupies residues 131–139; the sequence is FKDYVRDRA. A helix HI-2 region spans residues 150 to 157; sequence AAALAGYT. A DNA-binding region (ETS) is located at residues 162–242; sequence IQLWQFLLEL…AGKRYVYRFV (81 aa). A helix H4 region spans residues 245-249; the sequence is LQSLL. A helix H5 region spans residues 253 to 259; that stretch reads PEELHAM.

It belongs to the ETS family. As to quaternary structure, binds DNA as a homodimer; homodimerization is required for transcription activation.

Its subcellular location is the nucleus. The protein localises to the cytoplasm. With respect to regulation, autoinhibited by a module composed of four alpha helices (HI-1, HI-2, H4, and H5) that flank the DNA-binding ETS domain, reducing the affinity for DNA. Its function is as follows. Transcription factor. Directly controls the expression of cytokine and chemokine genes in a wide variety of different cellular contexts. The sequence is that of Protein c-ets-1-B (ets1-b) from Xenopus laevis (African clawed frog).